The following is a 585-amino-acid chain: MAGUK p55 subfamily member 3 (585 aa).

2 consecutive L27 domains span residues 6 to 60 (EDSG…ERQS) and 61 to 118 (PTPV…FDPV). Positions 137–212 (IVRLVKNKEP…LAQSQGSITL (76 aa)) constitute a PDZ domain. One can recognise an SH3 domain in the interval 226-296 (ESKVFMRALF…PSKGFQERRL (71 aa)). Residue S307 is modified to Phosphoserine. Positions 385–570 (PRLVVLIGSL…AYSQLKVVLE (186 aa)) constitute a Guanylate kinase-like domain.

This sequence belongs to the MAGUK family. Interacts with HTR2C; this interaction stabilizes the receptor at the plasma membrane and prevents the desensitization of the HTR2C receptor-mediated calcium response. Interacts with HTR2A. Interacts with HTR4. Interacts (via PDZ domain) with CADM1 (via C-terminus)Interacts (via PDZ domain) with CADM1; this interaction connects CADM1 with DLG1. Interacts (via Guanylate kinase-like domain) with PALS1. Interacts with DLG1 (via N-terminus); this interaction connects CADM1 with DLG1 and links CADM1 with the regulatory subunit of phosphoinositide-3-kinase (PI3K) by forming a multiprotein complex and participates in cell spreading. As to expression, expressed in retina (at protein level) at the subapical region (SAR) adjacent to adherens junctions at the OLM, and at the OPL.

The protein resides in the cell membrane. It is found in the apical cell membrane. It localises to the cell junction. The protein localises to the adherens junction. Its function is as follows. Participates in cell spreading through the phosphoinositide-3-kinase (PI3K) pathway by connecting CADM1 to DLG1 and the regulatory subunit of phosphoinositide-3-kinase (PI3K). Stabilizes HTR2C at the plasma membrane and prevents its desensitization. May participates in the maintenance of adherens junctions. The chain is MAGUK p55 subfamily member 3 from Homo sapiens (Human).